The primary structure comprises 119 residues: NADH-quinone oxidoreductase subunit A (119 aa).

Helical transmembrane passes span 7–27, 63–83, and 88–108; these read FPVLLFLVVGTGLGVALVSIG, LVAILFIIFDLETAFLFPWGV, and IGWPGFLAMMIFLLEFLLGFA.

It belongs to the complex I subunit 3 family. NDH-1 is composed of 14 different subunits. Subunits NuoA, H, J, K, L, M, N constitute the membrane sector of the complex.

It localises to the cell inner membrane. The enzyme catalyses a quinone + NADH + 5 H(+)(in) = a quinol + NAD(+) + 4 H(+)(out). In terms of biological role, NDH-1 shuttles electrons from NADH, via FMN and iron-sulfur (Fe-S) centers, to quinones in the respiratory chain. The immediate electron acceptor for the enzyme in this species is believed to be ubiquinone. Couples the redox reaction to proton translocation (for every two electrons transferred, four hydrogen ions are translocated across the cytoplasmic membrane), and thus conserves the redox energy in a proton gradient. This chain is NADH-quinone oxidoreductase subunit A, found in Paraburkholderia phytofirmans (strain DSM 17436 / LMG 22146 / PsJN) (Burkholderia phytofirmans).